Here is a 331-residue protein sequence, read N- to C-terminus: DNA double-strand break repair nuclease NurA (331 aa).

The Mn(2+) site is built by D56 and D131.

It belongs to the NurA family. Homodimer. Interacts with SSB. Requires Mn(2+) as cofactor.

The 5'-3' ssDNA and dsDNA exonuclease and ssDNA endonuclease activities are inhibited by SSB (single-stranded DNA-binding protein). In terms of biological role, involved in DNA double-strand break (DSB) repair. Probably acts with HerA to stimulate resection of the 5' strand and produce the long 3' single-strand that is required for RadA loading. Exhibits both single-stranded endonuclease activity and 5'-3' exonuclease activity on single-stranded and double-stranded DNA. The polypeptide is DNA double-strand break repair nuclease NurA (Sulfurisphaera tokodaii (strain DSM 16993 / JCM 10545 / NBRC 100140 / 7) (Sulfolobus tokodaii)).